Consider the following 171-residue polypeptide: Photosystem I assembly protein Ycf3 (171 aa).

TPR repeat units follow at residues 35-68, 72-105, and 120-153; these read AFTYYRDGMSAQAEGEYAEALQNYYEAMRLEVDA, SYILYNIGLIHTSNGEHAKALEYYYQALERNPYL, and GEQAIESGNSRISNLLFDKAADYWKEAIRLAPTN.

This sequence belongs to the Ycf3 family.

Its subcellular location is the plastid. The protein resides in the chloroplast thylakoid membrane. Functionally, essential for the assembly of the photosystem I (PSI) complex. May act as a chaperone-like factor to guide the assembly of the PSI subunits. This is Photosystem I assembly protein Ycf3 from Nephroselmis olivacea (Green alga).